Reading from the N-terminus, the 307-residue chain is Putative lipid kinase SERP0390 (307 aa).

One can recognise a DAGKc domain in the interval 3 to 139 (QPYNHGVLFY…YDVLKVNDLY (137 aa)). ATP contacts are provided by residues Ser44, 74–80 (GDGTLNE), and Thr101. Mg(2+) contacts are provided by Ser220, Asp223, and Arg225. Glu281 serves as the catalytic Proton acceptor.

The protein belongs to the diacylglycerol/lipid kinase family. The cofactor is Mg(2+).

Functionally, may catalyze the ATP-dependent phosphorylation of lipids other than diacylglycerol (DAG). In Staphylococcus epidermidis (strain ATCC 35984 / DSM 28319 / BCRC 17069 / CCUG 31568 / BM 3577 / RP62A), this protein is Putative lipid kinase SERP0390.